Reading from the N-terminus, the 213-residue chain is Histone H1.2 (213 aa).

Low complexity predominate over residues 1 to 17; the sequence is MSETAPAAPAAAPPAEK. The segment at 1-41 is disordered; sequence MSETAPAAPAAAPPAEKTPVKKKAAKKPAGARRKASGPPVS. At S2 the chain carries N-acetylserine; partial. Position 2 is a phosphoserine (S2). K17 bears the N6-acetyllysine mark. A compositionally biased stretch (basic residues) spans 20–35; the sequence is VKKKAAKKPAGARRKA. K23, K26, and K27 each carry N6-(2-hydroxyisobutyryl)lysine. K34 is modified (N6-(beta-hydroxybutyryl)lysine; alternate). The residue at position 34 (K34) is an N6-crotonyllysine; alternate. Position 34 is an N6-methyllysine; alternate (K34). The region spanning 36-109 is the H15 domain; that stretch reads SGPPVSELIT…GASGSFKLNK (74 aa). Residue K46 is modified to N6-(2-hydroxyisobutyryl)lysine. At K52 the chain carries N6-(beta-hydroxybutyryl)lysine; alternate. Position 52 is an N6-(2-hydroxyisobutyryl)lysine; alternate (K52). Position 54 is a citrulline (R54). K63 bears the N6-(2-hydroxyisobutyryl)lysine mark. Position 64 is an N6-(beta-hydroxybutyryl)lysine; alternate (K64). An N6-crotonyllysine; alternate modification is found at K64. At K64 the chain carries N6-(2-hydroxyisobutyryl)lysine; alternate. N6-(2-hydroxyisobutyryl)lysine is present on residues K75 and K81. N6-(beta-hydroxybutyryl)lysine; alternate is present on residues K85 and K90. Residues K85, K90, and K97 each carry the N6-crotonyllysine; alternate modification. 3 positions are modified to N6-(2-hydroxyisobutyryl)lysine; alternate: K85, K90, and K97. A disordered region spans residues 95-213; that stretch reads QTKGTGASGS…KPKKAAPKKK (119 aa). K97 bears the N6-succinyllysine; alternate mark. A Phosphoserine; by PKC modification is found at S104. K106 carries the N6-(beta-hydroxybutyryl)lysine modification. N6-(2-hydroxyisobutyryl)lysine is present on residues K110, K117, K121, K129, and K136. Over residues 119–140 the composition is skewed to basic residues; the sequence is KAKKAGAAKPKKAAGAAKKTKK. Residue T146 is modified to Phosphothreonine. N6-(2-hydroxyisobutyryl)lysine is present on K148. Residues 149–160 show a composition bias toward basic residues; that stretch reads KTAKKTPKKAKK. K159 and K168 each carry N6-crotonyllysine; alternate. 2 positions are modified to N6-(2-hydroxyisobutyryl)lysine; alternate: K159 and K168. A compositionally biased stretch (basic residues) spans 169–186; the sequence is KVAKSPKKAKAAKPKKAA. K187 carries the post-translational modification N6-methyllysine; by EHMT1 and EHMT2. Residue S188 is modified to ADP-ribosylserine. The span at 193–213 shows a compositional bias: basic residues; the sequence is VKPKAAKPKVAKPKKAAPKKK.

This sequence belongs to the histone H1/H5 family. H1 histones are progressively phosphorylated during the cell cycle, becoming maximally phosphorylated during late G2 phase and M phase, and being dephosphorylated sharply thereafter. Post-translationally, crotonylation (Kcr) is specifically present in male germ cells and marks testis-specific genes in post-meiotic cells, including X-linked genes that escape sex chromosome inactivation in haploid cells. Crotonylation marks active promoters and enhancers and confers resistance to transcriptional repressors. It is also associated with post-meiotically activated genes on autosomes. In terms of processing, ADP-ribosylated on Ser-188 in response to DNA damage. Citrullination at Arg-54 (H1R54ci) by PADI4 takes place within the DNA-binding site of H1 and results in its displacement from chromatin and global chromatin decondensation, thereby promoting pluripotency and stem cell maintenance.

Its subcellular location is the nucleus. It localises to the chromosome. In terms of biological role, histone H1 protein binds to linker DNA between nucleosomes forming the macromolecular structure known as the chromatin fiber. Histones H1 are necessary for the condensation of nucleosome chains into higher-order structured fibers. Also acts as a regulator of individual gene transcription through chromatin remodeling, nucleosome spacing and DNA methylation. The chain is Histone H1.2 from Bos taurus (Bovine).